A 243-amino-acid polypeptide reads, in one-letter code: ATP synthase subunit a (243 aa).

Transmembrane regions (helical) follow at residues 29–49 (NASL…YVGL), 54–74 (VIPN…VSTI), 89–109 (VFTI…PLGF), 114–134 (HIAV…FIGF), 141–161 (FLHI…MVLI), 177–197 (LAAN…FVIN), 200–220 (IFLT…EIFV), and 221–241 (AILQ…DAVN).

It belongs to the ATPase A chain family. In terms of assembly, F-type ATPases have 2 components, CF(1) - the catalytic core - and CF(0) - the membrane proton channel. CF(1) has five subunits: alpha(3), beta(3), gamma(1), delta(1), epsilon(1). CF(0) has three main subunits: a(1), b(2) and c(9-12). The alpha and beta chains form an alternating ring which encloses part of the gamma chain. CF(1) is attached to CF(0) by a central stalk formed by the gamma and epsilon chains, while a peripheral stalk is formed by the delta and b chains.

It is found in the cell inner membrane. In terms of biological role, key component of the proton channel; it plays a direct role in the translocation of protons across the membrane. In Ehrlichia ruminantium (strain Welgevonden), this protein is ATP synthase subunit a.